A 216-amino-acid chain; its full sequence is Small ribosomal subunit protein uS3c (216 aa).

The region spanning 43-118 (IKNYIQKNIR…KLNIAIVKIT (76 aa)) is the KH type-2 domain.

This sequence belongs to the universal ribosomal protein uS3 family. In terms of assembly, part of the 30S ribosomal subunit.

It is found in the plastid. The protein resides in the chloroplast. The chain is Small ribosomal subunit protein uS3c (rps3) from Phaseolus vulgaris (Kidney bean).